A 216-amino-acid polypeptide reads, in one-letter code: MEKFNVHTGVVAPLDRENVDTDAIIPKQFLKSIKRTGFGPNAFDEWRYLDHGEPGQDNSKRPLNPDFVLNQPRYQGASVLLARKNFGCGSSREHAPWALQQYGFRAIVAPSFADIFFNNCYKNGLLPIVLTEQQVDHLFNDTYAFNGYQLTIDLDAQVVRAPDGREYPFEITAFRKYCLLNGFDDIGLTLRHADKIRQFEAERLAKQPWLDNRLVG.

It belongs to the LeuD family. LeuD type 1 subfamily. As to quaternary structure, heterodimer of LeuC and LeuD.

The catalysed reaction is (2R,3S)-3-isopropylmalate = (2S)-2-isopropylmalate. The protein operates within amino-acid biosynthesis; L-leucine biosynthesis; L-leucine from 3-methyl-2-oxobutanoate: step 2/4. Functionally, catalyzes the isomerization between 2-isopropylmalate and 3-isopropylmalate, via the formation of 2-isopropylmaleate. The protein is 3-isopropylmalate dehydratase small subunit of Burkholderia mallei (strain NCTC 10247).